The primary structure comprises 197 residues: Probable nicotinate-nucleotide adenylyltransferase (197 aa).

This sequence belongs to the NadD family.

It catalyses the reaction nicotinate beta-D-ribonucleotide + ATP + H(+) = deamido-NAD(+) + diphosphate. It functions in the pathway cofactor biosynthesis; NAD(+) biosynthesis; deamido-NAD(+) from nicotinate D-ribonucleotide: step 1/1. Functionally, catalyzes the reversible adenylation of nicotinate mononucleotide (NaMN) to nicotinic acid adenine dinucleotide (NaAD). The chain is Probable nicotinate-nucleotide adenylyltransferase from Pseudothermotoga lettingae (strain ATCC BAA-301 / DSM 14385 / NBRC 107922 / TMO) (Thermotoga lettingae).